A 335-amino-acid chain; its full sequence is Cell division protein ZipA (335 aa).

Over 1–4 (MDLN) the chain is Periplasmic. The helical transmembrane segment at 5-25 (AILIILGVIALIILVAHGIWS) threads the bilayer. The Cytoplasmic segment spans residues 26 to 335 (NRREKSQYFE…AERDYLARVS (310 aa)).

This sequence belongs to the ZipA family. In terms of assembly, interacts with FtsZ via their C-terminal domains.

The protein localises to the cell inner membrane. In terms of biological role, essential cell division protein that stabilizes the FtsZ protofilaments by cross-linking them and that serves as a cytoplasmic membrane anchor for the Z ring. Also required for the recruitment to the septal ring of downstream cell division proteins. This is Cell division protein ZipA from Histophilus somni (strain 2336) (Haemophilus somnus).